The chain runs to 107 residues: Ferredoxin (107 aa).

The propeptide occupies 1 to 8 (MVSGVSRN). Residues cysteine 45, cysteine 51, and cysteine 54 each contribute to the [2Fe-2S] cluster site.

The cofactor is [2Fe-2S] cluster.

Its subcellular location is the hydrogenosome. Ferredoxins are iron-sulfur proteins that transfer electrons in a wide variety of metabolic reactions. The chain is Ferredoxin from Psalteriomonas lanterna (Amoeboflagellate).